Consider the following 421-residue polypeptide: 4'-demethylrebeccamycin synthase (421 aa).

It belongs to the glycosyltransferase 28 family.

It carries out the reaction 4'-demethylrebeccamycin + H2O = dichloroarcyriaflavin A + beta-D-glucose. It participates in alkaloid biosynthesis. In terms of biological role, catalyzes the penultimate step in the biosynthesis of rebeccamycin, an indolocarbazole alkaloid that inhibits topoisomerase 1. Has a wide substrate range, including staurosporine aglycone, EJG-III-108A, J-104303, 6-N-methyl-arcyriaflavin and indolo-[2,3-a]-carbazole. This chain is 4'-demethylrebeccamycin synthase (rebG), found in Lentzea aerocolonigenes (Lechevalieria aerocolonigenes).